The following is a 662-amino-acid chain: MAAENEASQESALGAYSPVDYMSITSFPRLPEDEPAPAAPLRGRKDEDAFLGDPDTDPDSFLKSARLQRLPSSSSEMGSQDGSPLRETRKDPFSAAAAECSCRQDGLTVIVTACLTFATGVTVALVMQIYFGDPQIFQQGAVVTDAARCTSLGIEVLSKQGSSVDAAVAAALCLGIVAPHSSGLGGGGVMLVHDIRRNESHLIDFRESAPGALREETLQRSWETKPGLLVGVPGMVKGLHEAHQLYGRLPWSQVLAFAAAVAQDGFNVTHDLARALAEQLPPNMSERFRETFLPSGRPPLPGSLLHRPDLAEVLDVLGTSGPAAFYAGGNLTLEMVAEAQHAGGVITEEDFSNYSALVEKPVCGVYRGHLVLSPPPPHTGPALISALNILEGFNLTSLVSREQALHWVAETLKIALALASRLGDPVYDSTITESMDDMLSKVEAAYLRGHINDSQAAPAPLLPVYELDGAPTAAQVLIMGPDDFIVAMVSSLNQPFGSGLITPSGILLNSQMLDFSWPNRTANHSAPSLENSVQPGKRPLSFLLPTVVRPAEGLCGTYLALGANGAARGLSGLTQVLLNVLTLNRNLSDSLARGRLHPDLQSNLLQVDSEFTEEEIEFLEARGHHVEKVDVLSWVHGSRRTNNFIIAVKDPRSPDAAGATIL.

At 1-106 the chain is on the cytoplasmic side; that stretch reads MAAENEASQE…AAECSCRQDG (106 aa). A phosphoserine mark is found at Ser17, Ser72, Ser79, and Ser83. Residues 26-90 form a disordered region; that stretch reads SFPRLPEDEP…DGSPLRETRK (65 aa). Low complexity predominate over residues 72 to 83; the sequence is SSSSEMGSQDGS. Residues 107–127 traverse the membrane as a helical; Signal-anchor for type II membrane protein segment; that stretch reads LTVIVTACLTFATGVTVALVM. The Extracellular portion of the chain corresponds to 128–662; sequence QIYFGDPQIF…SPDAAGATIL (535 aa). 10 N-linked (GlcNAc...) asparagine glycosylation sites follow: Asn198, Asn267, Asn283, Asn330, Asn353, Asn394, Asn452, Asn519, Asn523, and Asn586.

The protein belongs to the gamma-glutamyltransferase family. In terms of assembly, interacts with TLCD3A. As to quaternary structure, heterodimer composed of the light and heavy chains. The active site is located in the light chain. Post-translationally, cleaved by autocatalysis into a large and a small subunit and the autocatalytic cleavage is essential to the functional activation of the enzyme. As to expression, widely expressed, but at low level, except in the airway epithelial cells. Detected in brain, heart, kidney, liver, lung, spleen, testis and trachea.

It localises to the membrane. It catalyses the reaction an N-terminal (5-L-glutamyl)-[peptide] + an alpha-amino acid = 5-L-glutamyl amino acid + an N-terminal L-alpha-aminoacyl-[peptide]. The catalysed reaction is glutathione + H2O = L-cysteinylglycine + L-glutamate. It carries out the reaction an S-substituted glutathione + H2O = an S-substituted L-cysteinylglycine + L-glutamate. It participates in sulfur metabolism; glutathione metabolism. Its function is as follows. Hydrolyzes and transfers gamma-glutamyl moieties from glutathione and other gamma-glutamyl compounds to acceptors. This Homo sapiens (Human) protein is Glutathione hydrolase 7.